We begin with the raw amino-acid sequence, 794 residues long: K(+)-insensitive pyrophosphate-energized proton pump (794 aa).

5 helical membrane-spanning segments follow: residues Ala20–Val40, Thr74–Trp94, Ile102–Ala122, Gly163–Val183, and Gly194–Thr214. Lys215 serves as a coordination point for substrate. The Mg(2+) site is built by Asp218, Asp222, Asn245, and Asp248. 6 helical membrane-spanning segments follow: residues Tyr264 to Leu284, Ala285 to Val305, Gly321 to Leu341, Ile365 to Thr385, Ala422 to Thr442, and Leu446 to Val466. Asp476 provides a ligand contact to Mg(2+). 3 helical membrane-spanning segments follow: residues Ala508 to Ser528, Val564 to Val584, and Ile641 to Gly661. Positions 678, 704, and 708 each coordinate Ca(2+). Lys711 is a binding site for substrate. A run of 2 helical transmembrane segments spans residues Ala717–Ile737 and Val747–Val767.

This sequence belongs to the H(+)-translocating pyrophosphatase (TC 3.A.10) family. K(+)-insensitive subfamily. Homodimer. The cofactor is Mg(2+).

Its subcellular location is the cell membrane. It carries out the reaction diphosphate + H2O + H(+)(in) = 2 phosphate + 2 H(+)(out). Proton pump that utilizes the energy of pyrophosphate hydrolysis as the driving force for proton movement across the membrane. Generates a proton motive force. The chain is K(+)-insensitive pyrophosphate-energized proton pump from Streptomyces coelicolor (strain ATCC BAA-471 / A3(2) / M145).